We begin with the raw amino-acid sequence, 359 residues long: Uroporphyrinogen decarboxylase (359 aa).

Coproporphyrinogen III is bound by residues Arg28, Ala30, Arg32, Asp79, Tyr157, Ser212, and His335.

The protein belongs to the uroporphyrinogen decarboxylase family. As to quaternary structure, monomer.

The protein resides in the nucleus. The protein localises to the cytoplasm. The catalysed reaction is uroporphyrinogen III + 4 H(+) = coproporphyrinogen III + 4 CO2. It carries out the reaction uroporphyrinogen I + 4 H(+) = coproporphyrinogen I + 4 CO2. It functions in the pathway porphyrin-containing compound metabolism; protoporphyrin-IX biosynthesis; coproporphyrinogen-III from 5-aminolevulinate: step 4/4. Its function is as follows. Catalyzes the sequential decarboxylation of four acetate groups of uroporphyrinogen-III (octacarboxyporphyrin) to yield coproporphyrinogen-III (tetracarboxyporphyrin) with the formation of intermediate hepta-, hexa- and penta-carboxylate porphyrinogens in the heme biosynthesis pathway. Acts on a number of porphyrinogens, but only coproporphyrinogen III can ultimately be converted to heme. The polypeptide is Uroporphyrinogen decarboxylase (hem12) (Schizosaccharomyces pombe (strain 972 / ATCC 24843) (Fission yeast)).